Here is a 258-residue protein sequence, read N- to C-terminus: Aspartate/glutamate leucyltransferase (258 aa).

This sequence belongs to the R-transferase family. Bpt subfamily.

Its subcellular location is the cytoplasm. The enzyme catalyses N-terminal L-glutamyl-[protein] + L-leucyl-tRNA(Leu) = N-terminal L-leucyl-L-glutamyl-[protein] + tRNA(Leu) + H(+). It catalyses the reaction N-terminal L-aspartyl-[protein] + L-leucyl-tRNA(Leu) = N-terminal L-leucyl-L-aspartyl-[protein] + tRNA(Leu) + H(+). Its function is as follows. Functions in the N-end rule pathway of protein degradation where it conjugates Leu from its aminoacyl-tRNA to the N-termini of proteins containing an N-terminal aspartate or glutamate. The chain is Aspartate/glutamate leucyltransferase from Rhizobium johnstonii (strain DSM 114642 / LMG 32736 / 3841) (Rhizobium leguminosarum bv. viciae).